The sequence spans 62 residues: Conotoxin reg3.5 (62 aa).

A signal peptide spans 1-22; the sequence is MMFKLGVLLTICLLLFPLTGTA. A propeptide spanning residues 23–49 is cleaved from the precursor; that stretch reads LDGDQLAEHMLDISSGINDRWFDPVRK. 3 disulfide bridges follow: Cys-50-Cys-60, Cys-51-Cys-58, and Cys-56-Cys-61.

Belongs to the conotoxin M superfamily. Expressed by the venom duct.

Its subcellular location is the secreted. The chain is Conotoxin reg3.5 from Conus regius (Crown cone).